Here is a 353-residue protein sequence, read N- to C-terminus: Peptide chain release factor 1 (353 aa).

The residue at position 230 (Gln-230) is an N5-methylglutamine.

Belongs to the prokaryotic/mitochondrial release factor family. In terms of processing, methylated by PrmC. Methylation increases the termination efficiency of RF1.

The protein localises to the cytoplasm. In terms of biological role, peptide chain release factor 1 directs the termination of translation in response to the peptide chain termination codons UAG and UAA. This chain is Peptide chain release factor 1, found in Leptospira biflexa serovar Patoc (strain Patoc 1 / ATCC 23582 / Paris).